The primary structure comprises 277 residues: Shikimate dehydrogenase (NADP(+)) (277 aa).

Shikimate is bound by residues 15–17 and Thr64; that span reads SKS. Residue Lys68 is the Proton acceptor of the active site. Shikimate-binding residues include Asn89 and Asp104. NADP(+) is bound by residues 129–133, 153–158, and Met217; these read GAGGA and NRTAKR. Shikimate is bound at residue Tyr219. Gly242 is an NADP(+) binding site.

The protein belongs to the shikimate dehydrogenase family. Homodimer.

The catalysed reaction is shikimate + NADP(+) = 3-dehydroshikimate + NADPH + H(+). It participates in metabolic intermediate biosynthesis; chorismate biosynthesis; chorismate from D-erythrose 4-phosphate and phosphoenolpyruvate: step 4/7. Involved in the biosynthesis of the chorismate, which leads to the biosynthesis of aromatic amino acids. Catalyzes the reversible NADPH linked reduction of 3-dehydroshikimate (DHSA) to yield shikimate (SA). In Hydrogenovibrio crunogenus (strain DSM 25203 / XCL-2) (Thiomicrospira crunogena), this protein is Shikimate dehydrogenase (NADP(+)).